Consider the following 127-residue polypeptide: Small ribosomal subunit protein uS11 (127 aa).

Belongs to the universal ribosomal protein uS11 family. As to quaternary structure, part of the 30S ribosomal subunit. Interacts with proteins S7 and S18. Binds to IF-3.

Functionally, located on the platform of the 30S subunit, it bridges several disparate RNA helices of the 16S rRNA. Forms part of the Shine-Dalgarno cleft in the 70S ribosome. This is Small ribosomal subunit protein uS11 from Flavobacterium psychrophilum (strain ATCC 49511 / DSM 21280 / CIP 103535 / JIP02/86).